The sequence spans 341 residues: Ubiquinone biosynthesis protein COQ4, mitochondrial (341 aa).

The transit peptide at 1 to 16 (MLSRISSVRIGTQVRQ) directs the protein to the mitochondrion. Positions 220, 221, 224, and 236 each coordinate Zn(2+).

Belongs to the COQ4 family. Component of a multi-subunit COQ enzyme complex, composed of at least COQ3, COQ4, COQ5, COQ6, COQ7 and COQ9. Requires Zn(2+) as cofactor.

The protein localises to the mitochondrion inner membrane. The enzyme catalyses a 4-hydroxy-3-methoxy-5-(all-trans-polyprenyl)benzoate + H(+) = a 2-methoxy-6-(all-trans-polyprenyl)phenol + CO2. The protein operates within cofactor biosynthesis; ubiquinone biosynthesis. Its function is as follows. Lyase that catalyzes the C1-decarboxylation of 4-hydroxy-3-methoxy-5-(all-trans-polyprenyl)benzoic acid into 2-methoxy-6-(all-trans-polyprenyl)phenol during ubiquinone biosynthesis. This chain is Ubiquinone biosynthesis protein COQ4, mitochondrial, found in Vanderwaltozyma polyspora (strain ATCC 22028 / DSM 70294 / BCRC 21397 / CBS 2163 / NBRC 10782 / NRRL Y-8283 / UCD 57-17) (Kluyveromyces polysporus).